The primary structure comprises 1325 residues: Nucleoporin nup146 (1325 aa).

Disordered regions lie at residues 1-20 (MNAE…AGGS), 453-474 (VRAS…FVKN), 758-951 (GEGL…PKIH), and 973-994 (FPKQ…QESL). A compositionally biased stretch (polar residues) spans 763–778 (QQKTSKALPSTGITKL). Residues 779–791 (SENDNEKAEESNE) are compositionally biased toward basic and acidic residues. Over residues 792–801 (TKGFNTTIAK) the composition is skewed to polar residues. The segment covering 802-811 (QNDKSSKSEG) has biased composition (basic and acidic residues). Composition is skewed to polar residues over residues 816 to 835 (ANMS…SKPS) and 850 to 861 (FTFNKPSETPPF). The span at 867–881 (LVEKESKQDVSDTSD) shows a compositional bias: basic and acidic residues. Position 899 is a phosphothreonine (T899). The segment covering 927 to 937 (SEIEDQDEESS) has biased composition (acidic residues). At T946 the chain carries Phosphothreonine. Phosphoserine is present on residues S1041, S1043, and S1044.

It localises to the cytoplasm. Its subcellular location is the nucleus. In terms of biological role, functions as a component of the nuclear pore complex (NPC). NPC components, collectively referred to as nucleoporins (NUPs), can play the role of both NPC structural components and of docking or interaction partners for transiently associated nuclear transport factors. Active directional transport is assured by both, a Phe-Gly (FG) repeat affinity gradient for these transport factors across the NPC and a transport cofactor concentration gradient across the nuclear envelope. In Schizosaccharomyces pombe (strain 972 / ATCC 24843) (Fission yeast), this protein is Nucleoporin nup146 (nup146).